Consider the following 523-residue polypeptide: GMP synthase [glutamine-hydrolyzing] (523 aa).

In terms of domain architecture, Glutamine amidotransferase type-1 spans 8 to 205; the sequence is KILILDFGSQ…VENICGCARS (198 aa). Cys85 functions as the Nucleophile in the catalytic mechanism. Active-site residues include His179 and Glu181. One can recognise a GMPS ATP-PPase domain in the interval 206-398; it reads WTPENIIEDA…LGLPAEMLNR (193 aa). ATP is bound at residue 233 to 239; sequence SGGVDSS.

As to quaternary structure, homodimer.

The catalysed reaction is XMP + L-glutamine + ATP + H2O = GMP + L-glutamate + AMP + diphosphate + 2 H(+). It functions in the pathway purine metabolism; GMP biosynthesis; GMP from XMP (L-Gln route): step 1/1. In terms of biological role, catalyzes the synthesis of GMP from XMP. This Haemophilus ducreyi (strain 35000HP / ATCC 700724) protein is GMP synthase [glutamine-hydrolyzing].